The chain runs to 385 residues: D-alanine--D-alanine ligase (385 aa).

One can recognise an ATP-grasp domain in the interval 165 to 375 (KRVFTSFGLK…YPELVDRLVE (211 aa)). 201-256 (AGEHGWPLFVKPARAGSSIGITKVDDLAGLDEAVAEAQRHDPKIIVEALLRGREIE) provides a ligand contact to ATP. 3 residues coordinate Mg(2+): D329, E342, and N344.

The protein belongs to the D-alanine--D-alanine ligase family. The cofactor is Mg(2+). It depends on Mn(2+) as a cofactor.

It is found in the cytoplasm. It catalyses the reaction 2 D-alanine + ATP = D-alanyl-D-alanine + ADP + phosphate + H(+). It participates in cell wall biogenesis; peptidoglycan biosynthesis. Its function is as follows. Cell wall formation. The protein is D-alanine--D-alanine ligase of Streptomyces avermitilis (strain ATCC 31267 / DSM 46492 / JCM 5070 / NBRC 14893 / NCIMB 12804 / NRRL 8165 / MA-4680).